The sequence spans 78 residues: Neurogranin (78 aa).

N-acetylmethionine is present on Met1. Residues Cys3 and Cys51 are joined by a disulfide bond. An IQ domain is found at 26–47 (ANAAAAKIQASFRGHMARKKIK). At Ser36 the chain carries Phosphoserine; by PHK and PKC. Positions 39 to 78 (GHMARKKIKSGECGRKGPGPGGPGGAGGARGGAGGGPSGD) are disordered. The Collagen-like domain maps to 48-78 (SGECGRKGPGPGGPGGAGGARGGAGGGPSGD). The segment covering 54-78 (KGPGPGGPGGAGGARGGAGGGPSGD) has biased composition (gly residues). A Citrulline; partial modification is found at Arg68. Arg68 carries the post-translational modification Omega-N-methylarginine.

This sequence belongs to the neurogranin family. Interacts with apo-calmodulin; this interaction decreases the affinity of calmodulin for calcium ions. Disulfide bond formation is redox-sensitive. The cysteine residues are readily oxidized by several nitric acid (NO) donors and other oxidants to form intramolecular disulfide. Cys-51 can form a disulfide with any other of the cysteine residues with an order of reactivity Cys-9 &gt; Cys-4 &gt; Cys-3. Post-translationally, phosphorylated at Ser-36 by PHK and PKC, phosphorylation prevents interaction with Calmodulin and interrupts several learning- and memory-associated functions.

It localises to the cytoplasm. The protein resides in the synapse. Its subcellular location is the cell projection. The protein localises to the dendritic spine. Functionally, regulates the affinity of calmodulin for calcium. Involved in synaptic plasticity and spatial learning. This chain is Neurogranin (Nrgn), found in Mus musculus (Mouse).